Consider the following 147-residue polypeptide: Ribonuclease H (147 aa).

The RNase H type-1 domain maps to 1-142 (MREVIIYTDG…CDELARAAIA (142 aa)). D9, E47, D69, and D134 together coordinate Mg(2+).

The protein belongs to the RNase H family. As to quaternary structure, monomer. Mg(2+) is required as a cofactor.

It localises to the cytoplasm. The catalysed reaction is Endonucleolytic cleavage to 5'-phosphomonoester.. Its function is as follows. Endonuclease that specifically degrades the RNA of RNA-DNA hybrids. This chain is Ribonuclease H, found in Symbiobacterium thermophilum (strain DSM 24528 / JCM 14929 / IAM 14863 / T).